The following is a 172-amino-acid chain: Inorganic pyrophosphatase (172 aa).

Lys-28, Arg-42, and Tyr-54 together coordinate substrate. Mg(2+) is bound by residues Asp-64, Asp-69, and Asp-101. Residue Tyr-140 participates in substrate binding.

Belongs to the PPase family. Homohexamer. Mg(2+) serves as cofactor.

It is found in the cytoplasm. The catalysed reaction is diphosphate + H2O = 2 phosphate + H(+). Its function is as follows. Catalyzes the hydrolysis of inorganic pyrophosphate (PPi) forming two phosphate ions. The protein is Inorganic pyrophosphatase of Campylobacter jejuni subsp. jejuni serotype O:2 (strain ATCC 700819 / NCTC 11168).